Here is a 168-residue protein sequence, read N- to C-terminus: ATP synthase F(1) complex subunit delta, mitochondrial (168 aa).

The N-terminal 22 residues, 1–22 (MLPAALLRHPGLRRLVLQARTY), are a transit peptide targeting the mitochondrion. An N6-acetyllysine; alternate mark is found at lysine 136 and lysine 165. An N6-succinyllysine; alternate mark is found at lysine 136 and lysine 165.

Belongs to the ATPase epsilon chain family. As to quaternary structure, component of the ATP synthase complex composed at least of ATP5F1A/subunit alpha, ATP5F1B/subunit beta, ATP5MC1/subunit c (homooctomer), MT-ATP6/subunit a, MT-ATP8/subunit 8, ATP5ME/subunit e, ATP5MF/subunit f, ATP5MG/subunit g, ATP5MK/subunit k, ATP5MJ/subunit j, ATP5F1C/subunit gamma, ATP5F1D/subunit delta, ATP5F1E/subunit epsilon, ATP5PF/subunit F6, ATP5PB/subunit b, ATP5PD/subunit d, ATP5PO/subunit OSCP. ATP synthase complex consists of a soluble F(1) head domain (subunits alpha(3) and beta(3)) - the catalytic core - and a membrane F(0) domain - the membrane proton channel (subunits c, a, 8, e, f, g, k and j). These two domains are linked by a central stalk (subunits gamma, delta, and epsilon) rotating inside the F1 region and a stationary peripheral stalk (subunits F6, b, d, and OSCP). Component of a complex composed at least by ATPIF1, ATP5F1A, ATP5F1B, ATP5F1C AND ATP5F1E.

It is found in the mitochondrion. The protein localises to the mitochondrion inner membrane. Subunit delta, of the mitochondrial membrane ATP synthase complex (F(1)F(0) ATP synthase or Complex V) that produces ATP from ADP in the presence of a proton gradient across the membrane which is generated by electron transport complexes of the respiratory chain. ATP synthase complex consist of a soluble F(1) head domain - the catalytic core - and a membrane F(1) domain - the membrane proton channel. These two domains are linked by a central stalk rotating inside the F(1) region and a stationary peripheral stalk. During catalysis, ATP synthesis in the catalytic domain of F(1) is coupled via a rotary mechanism of the central stalk subunits to proton translocation. In vivo, can only synthesize ATP although its ATP hydrolase activity can be activated artificially in vitro. With the central stalk subunit gamma, is essential for the biogenesis of F(1) catalytic part of the ATP synthase complex namely in the formation of F1 assembly intermediate. The protein is ATP synthase F(1) complex subunit delta, mitochondrial of Rattus norvegicus (Rat).